The sequence spans 226 residues: MSQNSELRQSFIRFAVEAGVLSFGEFVTKAGRTSPYFFNAGKFSDGALLGQVAQFYAKTLLDSGVQFDMLFGPAYKGITLASATAVALAGMGRNVGFAYNRKEAKDHGEGGSLVGAKLQGRVVIVDDVISAGTSVRESVELIRNAGATPAAVLILMDRMERSGNAVDIGERSAVQDVQAQYGMPVVSIANLDDLLGYLDHAGDPALAGYRAKAAAYRDKYGVSAVV.

Lys-29 is a 5-phospho-alpha-D-ribose 1-diphosphate binding site. Phe-37–Phe-38 is a binding site for orotate. 5-phospho-alpha-D-ribose 1-diphosphate is bound by residues Tyr-75–Lys-76, Arg-101, Lys-102, Lys-105, His-107, and Asp-126–Ser-134. 2 residues coordinate orotate: Ser-130 and Arg-158.

This sequence belongs to the purine/pyrimidine phosphoribosyltransferase family. PyrE subfamily. As to quaternary structure, homodimer. Mg(2+) serves as cofactor.

The catalysed reaction is orotidine 5'-phosphate + diphosphate = orotate + 5-phospho-alpha-D-ribose 1-diphosphate. Its pathway is pyrimidine metabolism; UMP biosynthesis via de novo pathway; UMP from orotate: step 1/2. Catalyzes the transfer of a ribosyl phosphate group from 5-phosphoribose 1-diphosphate to orotate, leading to the formation of orotidine monophosphate (OMP). The protein is Orotate phosphoribosyltransferase of Ralstonia nicotianae (strain ATCC BAA-1114 / GMI1000) (Ralstonia solanacearum).